Reading from the N-terminus, the 164-residue chain is MERFLENAMYASRWLLAPVYFGLSLALIALALKFFQEIIHVLPNIFSMAESDLILVLLSLVDMTLVGGLLVMVMFSGYENFVSQLDISENKEKLNWLGKMDATSLKNKVAASIVAISSIHLLRVFMDAKNVPDNKLMWYVIIHLTFVLSAFVMGYLDRLTRHNH.

3 helical membrane passes run 15–35 (LLAP…LKFF), 53–73 (LILV…LVMV), and 136–156 (LMWY…MGYL).

It belongs to the UPF0114 family.

The protein localises to the cell membrane. The chain is UPF0114 protein YqhA from Escherichia coli O6:H1 (strain CFT073 / ATCC 700928 / UPEC).